The following is a 130-amino-acid chain: Large ribosomal subunit protein bL12 (130 aa).

This sequence belongs to the bacterial ribosomal protein bL12 family. In terms of assembly, homodimer. Part of the ribosomal stalk of the 50S ribosomal subunit. Forms a multimeric L10(L12)X complex, where L10 forms an elongated spine to which 2 to 4 L12 dimers bind in a sequential fashion. Binds GTP-bound translation factors.

In terms of biological role, forms part of the ribosomal stalk which helps the ribosome interact with GTP-bound translation factors. Is thus essential for accurate translation. This chain is Large ribosomal subunit protein bL12, found in Prochlorococcus marinus (strain SARG / CCMP1375 / SS120).